We begin with the raw amino-acid sequence, 156 residues long: Ribosome maturation factor RimP (156 aa).

It belongs to the RimP family.

The protein localises to the cytoplasm. Required for maturation of 30S ribosomal subunits. In Synechococcus sp. (strain JA-2-3B'a(2-13)) (Cyanobacteria bacterium Yellowstone B-Prime), this protein is Ribosome maturation factor RimP.